The following is a 120-amino-acid chain: Ribosome-binding factor A (120 aa).

The protein belongs to the RbfA family. As to quaternary structure, monomer. Binds 30S ribosomal subunits, but not 50S ribosomal subunits or 70S ribosomes.

It localises to the cytoplasm. One of several proteins that assist in the late maturation steps of the functional core of the 30S ribosomal subunit. Associates with free 30S ribosomal subunits (but not with 30S subunits that are part of 70S ribosomes or polysomes). Required for efficient processing of 16S rRNA. May interact with the 5'-terminal helix region of 16S rRNA. The chain is Ribosome-binding factor A from Chlorobaculum tepidum (strain ATCC 49652 / DSM 12025 / NBRC 103806 / TLS) (Chlorobium tepidum).